The sequence spans 345 residues: S-adenosylmethionine:tRNA ribosyltransferase-isomerase (345 aa).

It belongs to the QueA family. As to quaternary structure, monomer.

It is found in the cytoplasm. The catalysed reaction is 7-aminomethyl-7-carbaguanosine(34) in tRNA + S-adenosyl-L-methionine = epoxyqueuosine(34) in tRNA + adenine + L-methionine + 2 H(+). Its pathway is tRNA modification; tRNA-queuosine biosynthesis. Transfers and isomerizes the ribose moiety from AdoMet to the 7-aminomethyl group of 7-deazaguanine (preQ1-tRNA) to give epoxyqueuosine (oQ-tRNA). This is S-adenosylmethionine:tRNA ribosyltransferase-isomerase from Thermus thermophilus (strain ATCC BAA-163 / DSM 7039 / HB27).